The primary structure comprises 71 residues: Disintegrin halysin (71 aa).

In terms of domain architecture, Disintegrin spans 1–71; sequence EAGEECDCGS…ISAGCPRNPF (71 aa). 6 disulfide bridges follow: Cys6–Cys21, Cys8–Cys16, Cys15–Cys38, Cys29–Cys35, Cys34–Cys59, and Cys47–Cys66. The short motif at 51-53 is the Cell attachment site element; that stretch reads RGD.

Belongs to the venom metalloproteinase (M12B) family. P-II subfamily. P-IIa sub-subfamily. In terms of assembly, monomer. Expressed by the venom gland.

It localises to the secreted. Inhibits fibrinogen interaction with platelets. Acts by binding to alpha-IIb/beta-3 (ITGA2B/ITGB3) on the platelet surface and inhibits aggregation induced by ADP, thrombin, platelet-activating factor and collagen. This is Disintegrin halysin from Gloydius blomhoffii (Mamushi).